Here is a 395-residue protein sequence, read N- to C-terminus: Elongation factor Tu (395 aa).

Positions 10–204 constitute a tr-type G domain; it reads KPHVNIGTIG…AVDSYIPTPE (195 aa). Residues 19-26 are G1; the sequence is GHVDHGKT. 19 to 26 contributes to the GTP binding site; it reads GHVDHGKT. Thr-26 lines the Mg(2+) pocket. Residues 60–64 are G2; the sequence is GITIS. Residues 81–84 form a G3 region; that stretch reads DCPG. GTP-binding positions include 81–85 and 136–139; these read DCPGH and NKCD. The segment at 136 to 139 is G4; the sequence is NKCD. Residues 174–176 form a G5 region; the sequence is SAL.

This sequence belongs to the TRAFAC class translation factor GTPase superfamily. Classic translation factor GTPase family. EF-Tu/EF-1A subfamily. In terms of assembly, monomer. Phosphorylated on serine and/or threonine residue(s). Dephosphorylated by stp.

It localises to the cytoplasm. The catalysed reaction is GTP + H2O = GDP + phosphate + H(+). GTP hydrolase that promotes the GTP-dependent binding of aminoacyl-tRNA to the A-site of ribosomes during protein biosynthesis. This Listeria innocua serovar 6a (strain ATCC BAA-680 / CLIP 11262) protein is Elongation factor Tu.